Reading from the N-terminus, the 475-residue chain is Ribulose bisphosphate carboxylase large chain (475 aa).

The propeptide occupies Met-1–Val-2. N-acetylproline is present on Pro-3. At Lys-14 the chain carries N6,N6,N6-trimethyllysine. Asn-123 and Thr-173 together coordinate substrate. Lys-175 (proton acceptor) is an active-site residue. Lys-177 contributes to the substrate binding site. Positions 201, 203, and 204 each coordinate Mg(2+). Position 201 is an N6-carboxylysine (Lys-201). His-294 acts as the Proton acceptor in catalysis. Residues Arg-295, His-327, and Ser-379 each contribute to the substrate site.

The protein belongs to the RuBisCO large chain family. Type I subfamily. Heterohexadecamer of 8 large chains and 8 small chains. It depends on Mg(2+) as a cofactor.

It localises to the plastid. The protein resides in the chloroplast. It catalyses the reaction 2 (2R)-3-phosphoglycerate + 2 H(+) = D-ribulose 1,5-bisphosphate + CO2 + H2O. The catalysed reaction is D-ribulose 1,5-bisphosphate + O2 = 2-phosphoglycolate + (2R)-3-phosphoglycerate + 2 H(+). In terms of biological role, ruBisCO catalyzes two reactions: the carboxylation of D-ribulose 1,5-bisphosphate, the primary event in carbon dioxide fixation, as well as the oxidative fragmentation of the pentose substrate in the photorespiration process. Both reactions occur simultaneously and in competition at the same active site. The protein is Ribulose bisphosphate carboxylase large chain of Dunaliella tertiolecta (Green alga).